The chain runs to 965 residues: Receptor-like protein 15 (965 aa).

Residues 1 to 23 form the signal peptide; the sequence is MEGKVFLGHNLIWVMLLMGQLHG. At 24–916 the chain is on the extracellular side; it reads YKSCIDEEKI…GVEADESIID (893 aa). N-linked (GlcNAc...) asparagine glycans are attached at residues asparagine 57, asparagine 95, asparagine 109, and asparagine 145. LRR repeat units follow at residues 80 to 102, 103 to 127, 131 to 154, 156 to 179, 180 to 204, 206 to 230, 243 to 267, 268 to 290, 292 to 315, 316 to 341, 342 to 365, 366 to 389, 391 to 415, 417 to 435, 437 to 461, 462 to 485, and 487 to 512; these read EISFGGLSLKDNSLLNLSLLHPF, EDVRSLNLSSSRCSGLFDDVEGYKS, LRKLEILDLASNKFNNSIFHFLSA, TSLTTLFLRSNNMDGSFPAKELRD, LTNLELLDLSRNRFNGSIPIQELSS, RKLKALDLSGNEFSGSMELQGKFCT, LNNMQELDLSQNKLVGHLPSCLTSL, TGLRVLDLSSNKLTGTVPSSLGS, QSLEYLSLFDNDFEGSFSFGSLAN, LSNLMVLKLCSKSSSLQVLSESSWKP, KFQLSVIALRSCNMEKVPHFLLHQ, KDLRHVDLSDNNISGKLPSWLLAN, TKLKVLLLQNNLFTSFQIPKSAHNL, FLDVSANDFNHLFPENIGW, FPHLRYLNTSKNNFQENLPSSLGNM, NGIQYMDLSRNSFHGNLPRSFVNG, and YSMAILKLSHNKLSGEIFPESTNFTN. Asparagine 194 carries an N-linked (GlcNAc...) asparagine glycan. Asparagine 315 carries N-linked (GlcNAc...) asparagine glycosylation. 2 N-linked (GlcNAc...) asparagine glycosylation sites follow: asparagine 377 and asparagine 389. An N-linked (GlcNAc...) asparagine glycan is attached at asparagine 444. Residue asparagine 509 is glycosylated (N-linked (GlcNAc...) asparagine). The LRR 18; degenerate repeat unit spans residues 514–533; that stretch reads LGLFMDNNLFTGKIGQGLRS. 11 LRR repeats span residues 534–557, 558–582, 584–606, 608–627, 628–652, 654–674, 675–698, 778–801, 802–825, 827–850, and 851–875; these read LINLELLDMSNNNLTGVIPSWIGE, LPSLTALLISDNFLKGDIPMSLFNK, SLQLLDLSANSLSGVIPPQHDSR, GVVLLLQDNKLSGTIPDTLL, ANVEILDLRNNRFSGKIPEFINIQN, SILLLRGNNFTGQIPHQLCGL, SNIQLLDLSNNRLNGTIPSCLSNT, LKLLFGMDLSENELSGEIPVEFGG, LLELRALNLSHNNLSGVIPKSISS, EKMESFDLSFNRLQGRIPSQLTEL, and TSLSVFKVSHNNLSGVIPQGRQFNT. Residues asparagine 546 and asparagine 581 are each glycosylated (N-linked (GlcNAc...) asparagine). N-linked (GlcNAc...) asparagine glycosylation is found at asparagine 652, asparagine 662, asparagine 688, and asparagine 697. N-linked (GlcNAc...) asparagine glycans are attached at residues asparagine 809 and asparagine 814. N-linked (GlcNAc...) asparagine glycosylation is found at asparagine 862, asparagine 893, and asparagine 898. A helical membrane pass occupies residues 917–937; the sequence is MVSFYLSFAAAYVTILIGILA. Residues 938–965 lie on the Cytoplasmic side of the membrane; it reads SLSFDSPWSRFWFYKVDAFIKKVRNLLL.

This sequence belongs to the RLP family.

The protein resides in the cell membrane. This Arabidopsis thaliana (Mouse-ear cress) protein is Receptor-like protein 15.